Here is a 206-residue protein sequence, read N- to C-terminus: Probable GTP-binding protein EngB (206 aa).

The 175-residue stretch at Q24–L198 folds into the EngB-type G domain. Residues G32–S39, G59–L63, D77–G80, T144–D147, and F177–A179 each bind GTP. Residues S39 and T61 each contribute to the Mg(2+) site.

It belongs to the TRAFAC class TrmE-Era-EngA-EngB-Septin-like GTPase superfamily. EngB GTPase family. It depends on Mg(2+) as a cofactor.

Its function is as follows. Necessary for normal cell division and for the maintenance of normal septation. In Alkalilimnicola ehrlichii (strain ATCC BAA-1101 / DSM 17681 / MLHE-1), this protein is Probable GTP-binding protein EngB.